A 268-amino-acid chain; its full sequence is Early nodulin-20 (268 aa).

The signal sequence occupies residues 1–24; it reads MSSSSPILLMFIFSIWMLISYSES. Residues 25–129 form the Phytocyanin domain; that stretch reads TDYLVGDSEN…GLKLAVVVMV (105 aa). A glycan (N-linked (GlcNAc...) asparagine) is linked at Asn67. An intrachain disulfide couples Cys83 to Cys117. 2 stretches are compositionally biased toward pro residues: residues 134–145 and 160–185; these read SSPPPPPSPPTP and PSPP…TPIP. Positions 134-253 are disordered; the sequence is SSPPPPPSPP…SGSKGGGAGH (120 aa). The segment covering 199 to 235 has biased composition (low complexity); it reads PSLSKSPSPSESPSLAPSPSDSVASLAPSSSPSDESP. A lipid anchor (GPI-anchor amidated serine) is attached at Ser243. A propeptide spans 244-268 (removed in mature form); sequence SGSKGGGAGHGFLEVSIAMMMFLIF.

Belongs to the early nodulin-like (ENODL) family.

The protein resides in the cell membrane. In terms of biological role, may act as a carbohydrate transporter. The polypeptide is Early nodulin-20 (Medicago truncatula (Barrel medic)).